Consider the following 422-residue polypeptide: Enolase (422 aa).

S41 lines the Mg(2+) pocket. E163 is a (2R)-2-phosphoglycerate binding site. The active-site Proton donor is the E204. The Mg(2+) site is built by D241, E284, and D311. K336 acts as the Proton acceptor in catalysis. R365, S366, and K387 together coordinate (2R)-2-phosphoglycerate.

It belongs to the enolase family. In terms of assembly, homodimer. Component of the RNA degradosome, a multiprotein complex involved in RNA processing and mRNA degradation. Mg(2+) serves as cofactor.

The protein resides in the cytoplasm. Its subcellular location is the secreted. It localises to the cell surface. It carries out the reaction (2R)-2-phosphoglycerate = phosphoenolpyruvate + H2O. It participates in carbohydrate degradation; glycolysis; pyruvate from D-glyceraldehyde 3-phosphate: step 4/5. Functionally, catalyzes the reversible conversion of 2-phosphoglycerate (2-PG) into phosphoenolpyruvate (PEP). It is essential for the degradation of carbohydrates via glycolysis. This is Enolase from Legionella pneumophila subsp. pneumophila (strain Philadelphia 1 / ATCC 33152 / DSM 7513).